We begin with the raw amino-acid sequence, 373 residues long: Hydrogenase maturation factor HypD (373 aa).

Fe cation contacts are provided by Cys41, Cys69, and Cys72.

This sequence belongs to the HypD family. Monomer. Interacts with HypC. Forms a complex with HypC, or HybG, and HypE. It depends on [4Fe-4S] cluster as a cofactor.

The protein operates within protein modification; [NiFe] hydrogenase maturation. Its function is as follows. Involved in the maturation of [NiFe] hydrogenases. Involved in the biosynthesis of the Fe(CN)(2)CO cofactor. HypD may act as a scaffold on which the Fe(CN)(2)CO cofactor is formed. In complex with HypC, accepts the cyanide ligand generated by HypF and HypE, and also coordinates the carbon monoxide ligand. Required for the formation of all three hydrogenase isoenzymes. The protein is Hydrogenase maturation factor HypD of Escherichia coli (strain K12).